The sequence spans 239 residues: Sugar fermentation stimulation protein homolog (239 aa).

It belongs to the SfsA family.

The polypeptide is Sugar fermentation stimulation protein homolog (Methylobacterium sp. (strain 4-46)).